Reading from the N-terminus, the 236-residue chain is Thiamine-phosphate synthase (236 aa).

4-amino-2-methyl-5-(diphosphooxymethyl)pyrimidine is bound by residues 57-61 (QLRDK) and Asn-89. The Mg(2+) site is built by Asp-90 and Asp-109. Residue Ser-128 coordinates 4-amino-2-methyl-5-(diphosphooxymethyl)pyrimidine. Position 154–156 (154–156 (TPS)) interacts with 2-[(2R,5Z)-2-carboxy-4-methylthiazol-5(2H)-ylidene]ethyl phosphate. Lys-157 serves as a coordination point for 4-amino-2-methyl-5-(diphosphooxymethyl)pyrimidine. Residues Gly-185 and 205 to 206 (IS) contribute to the 2-[(2R,5Z)-2-carboxy-4-methylthiazol-5(2H)-ylidene]ethyl phosphate site.

It belongs to the thiamine-phosphate synthase family. It depends on Mg(2+) as a cofactor.

It catalyses the reaction 2-[(2R,5Z)-2-carboxy-4-methylthiazol-5(2H)-ylidene]ethyl phosphate + 4-amino-2-methyl-5-(diphosphooxymethyl)pyrimidine + 2 H(+) = thiamine phosphate + CO2 + diphosphate. It carries out the reaction 2-(2-carboxy-4-methylthiazol-5-yl)ethyl phosphate + 4-amino-2-methyl-5-(diphosphooxymethyl)pyrimidine + 2 H(+) = thiamine phosphate + CO2 + diphosphate. The enzyme catalyses 4-methyl-5-(2-phosphooxyethyl)-thiazole + 4-amino-2-methyl-5-(diphosphooxymethyl)pyrimidine + H(+) = thiamine phosphate + diphosphate. The protein operates within cofactor biosynthesis; thiamine diphosphate biosynthesis; thiamine phosphate from 4-amino-2-methyl-5-diphosphomethylpyrimidine and 4-methyl-5-(2-phosphoethyl)-thiazole: step 1/1. Condenses 4-methyl-5-(beta-hydroxyethyl)thiazole monophosphate (THZ-P) and 2-methyl-4-amino-5-hydroxymethyl pyrimidine pyrophosphate (HMP-PP) to form thiamine monophosphate (TMP). This Roseiflexus sp. (strain RS-1) protein is Thiamine-phosphate synthase.